The sequence spans 103 residues: Small ribosomal subunit protein uS10 (103 aa).

This sequence belongs to the universal ribosomal protein uS10 family. In terms of assembly, part of the 30S ribosomal subunit.

Involved in the binding of tRNA to the ribosomes. This chain is Small ribosomal subunit protein uS10, found in Neisseria gonorrhoeae (strain NCCP11945).